Here is a 1169-residue protein sequence, read N- to C-terminus: Rabankyrin-5 (1169 aa).

A2 carries the N-acetylalanine modification. One can recognise a BTB domain in the interval 68–130 (SDLKIKVGDR…IYTDELEFRE (63 aa)). ANK repeat units follow at residues 217–247 (KTEY…QLPG), 255–284 (NGDL…DVDM), 288–317 (NGWS…LVNA), 322–362 (AQET…NPNM), and 366–396 (KGRT…DLEL). S270 is subject to Phosphoserine. An NPF motif is present at residues 421 to 423 (NPF). 16 ANK repeats span residues 490-519 (WGET…NPNL), 542-572 (YLQT…ALHA), 588-617 (RDQT…SIND), 621-650 (DGQT…DINV), 654-683 (DGET…DMSV), 687-716 (KGNP…DATC), 724-753 (CLQT…DVNS), 769-798 (DGQT…NVNA), 802-832 (EGRT…ELSV), 836-865 (QGLT…GAAE), 870-899 (KGRN…NVNS), 905-934 (SKLT…KVNE), 938-967 (HRQT…DFAA), 971-1001 (NGNN…DAEA), 1005-1037 (RGQS…EYPL), and 1043-1072 (EGNT…RLGV). The interval 650 to 759 (VRTQDGETAL…DVNSPRQPGT (110 aa)) is interaction with RHOD and RAB5A. The segment at 1104–1164 (WCDGSNCYEC…VCNICFDVLT (61 aa)) adopts an FYVE-type zinc-finger fold. Residues C1110, C1113, C1126, C1129, C1134, C1137, C1156, and C1159 each contribute to the Zn(2+) site.

As to quaternary structure, interacts with RAB5A (in GTP-bound form). Interacts with RHOD (independent of GTP-loaded status). Interacts with EHD1. Interacts with VPS26A; the interaction is independent of EHD1 and is indicative for an association with the cargo recognition subcomplex of the retromer complex. As to expression, expressed in kidney proximal tubule epithelial cells; at protein level.

Its subcellular location is the cytoplasm. It is found in the endosome membrane. It localises to the cytoplasmic vesicle. Proposed effector of Rab5. Binds to phosphatidylinositol 3-phosphate (PI(3)P). Involved in homotypic early endosome fusion and to a lesser extent in heterotypic fusion of chlathrin-coated vesicles with early endosomes. Required for correct endosomal localization. Involved in the internalization and trafficking of activated tyrosine kinase receptors such as PDGFRB. Regulates the subcellular localization of the retromer complex in a EHD1-dependent manner. Involved in endosome-to-Golgi transport and biosynthetic transport to late endosomes and lysosomes indicative for a regulation of retromer complex-mediated retrograde transport. Involved in macropinocytosis; the function is dependent on Rab5-GTP. This Mus musculus (Mouse) protein is Rabankyrin-5 (Ankfy1).